Here is a 938-residue protein sequence, read N- to C-terminus: Isoleucine--tRNA ligase (938 aa).

A 'HIGH' region motif is present at residues 58–68 (PYANGSIHIGH). Lys183 carries the N6-acetyllysine modification. Glu561 provides a ligand contact to L-isoleucyl-5'-AMP. A 'KMSKS' region motif is present at residues 602-606 (KMSKS). Residue Lys605 coordinates ATP. Positions 901, 904, 921, and 924 each coordinate Zn(2+).

The protein belongs to the class-I aminoacyl-tRNA synthetase family. IleS type 1 subfamily. In terms of assembly, monomer. It depends on Zn(2+) as a cofactor.

Its subcellular location is the cytoplasm. The enzyme catalyses tRNA(Ile) + L-isoleucine + ATP = L-isoleucyl-tRNA(Ile) + AMP + diphosphate. Functionally, catalyzes the attachment of isoleucine to tRNA(Ile). As IleRS can inadvertently accommodate and process structurally similar amino acids such as valine, to avoid such errors it has two additional distinct tRNA(Ile)-dependent editing activities. One activity is designated as 'pretransfer' editing and involves the hydrolysis of activated Val-AMP. The other activity is designated 'posttransfer' editing and involves deacylation of mischarged Val-tRNA(Ile). This chain is Isoleucine--tRNA ligase, found in Shigella boydii serotype 4 (strain Sb227).